The sequence spans 350 residues: MLAPSQVSLADLPRLHKGDRPQAEFKQTPEDFQVIEQLDVIDDGEGEHQWLWVRKTGANTNFCAEKIARFAGVSERNVSYSGLKDRQAVTWQWFSIQLPGKETLNWNELNDEEMSVERIIRRTKKLKTGFHRANRFVIRLANVSSREALENLWQGVSEQGVINYFGEQRFGRSGDNVAQAERWLMASRPPRISRSKRSLYLSALRSYLFNEIVAERIRQFGIEGTLTGDCVMLEGSQSVFTVEQWDDELKQRLANNNIYLTAPLAGSTNKPLVKGEADAFEQSLLQPFDSWLQALRKLRVEAARRTILLRVENPEISWQGKDAELRFTLPSGAYATTVLNEIVDLSGESR.

The active-site Nucleophile is Asp85. Positions Gly160–Arg310 constitute a TRUD domain.

The protein belongs to the pseudouridine synthase TruD family.

The enzyme catalyses uridine(13) in tRNA = pseudouridine(13) in tRNA. Its function is as follows. Responsible for synthesis of pseudouridine from uracil-13 in transfer RNAs. This Idiomarina loihiensis (strain ATCC BAA-735 / DSM 15497 / L2-TR) protein is tRNA pseudouridine synthase D.